The primary structure comprises 1014 residues: Isoleucine--tRNA ligase (1014 aa).

The 'HIGH' region signature appears at 48 to 58 (PTANGRPGIHH). Positions 628-632 (KMSKS) match the 'KMSKS' region motif. Position 631 (Lys-631) interacts with ATP.

This sequence belongs to the class-I aminoacyl-tRNA synthetase family. IleS type 2 subfamily. As to quaternary structure, monomer. It depends on Zn(2+) as a cofactor.

Its subcellular location is the cytoplasm. The catalysed reaction is tRNA(Ile) + L-isoleucine + ATP = L-isoleucyl-tRNA(Ile) + AMP + diphosphate. Its function is as follows. Catalyzes the attachment of isoleucine to tRNA(Ile). As IleRS can inadvertently accommodate and process structurally similar amino acids such as valine, to avoid such errors it has two additional distinct tRNA(Ile)-dependent editing activities. One activity is designated as 'pretransfer' editing and involves the hydrolysis of activated Val-AMP. The other activity is designated 'posttransfer' editing and involves deacylation of mischarged Val-tRNA(Ile). The sequence is that of Isoleucine--tRNA ligase from Dehalococcoides mccartyi (strain ATCC BAA-2266 / KCTC 15142 / 195) (Dehalococcoides ethenogenes (strain 195)).